The following is a 418-amino-acid chain: Gamma-glutamyl phosphate reductase (418 aa).

This sequence belongs to the gamma-glutamyl phosphate reductase family.

Its subcellular location is the cytoplasm. The enzyme catalyses L-glutamate 5-semialdehyde + phosphate + NADP(+) = L-glutamyl 5-phosphate + NADPH + H(+). The protein operates within amino-acid biosynthesis; L-proline biosynthesis; L-glutamate 5-semialdehyde from L-glutamate: step 2/2. In terms of biological role, catalyzes the NADPH-dependent reduction of L-glutamate 5-phosphate into L-glutamate 5-semialdehyde and phosphate. The product spontaneously undergoes cyclization to form 1-pyrroline-5-carboxylate. The polypeptide is Gamma-glutamyl phosphate reductase (Photobacterium profundum (strain SS9)).